We begin with the raw amino-acid sequence, 424 residues long: UDP-N-acetylglucosamine 1-carboxyvinyltransferase (424 aa).

Residue 22-23 (KN) participates in phosphoenolpyruvate binding. Arg93 is a UDP-N-acetyl-alpha-D-glucosamine binding site. The active-site Proton donor is the Cys117. Cys117 is subject to 2-(S-cysteinyl)pyruvic acid O-phosphothioketal. UDP-N-acetyl-alpha-D-glucosamine contacts are provided by residues 122–126 (RPVDL), 162–165 (KVSV), Asp307, and Ile329.

This sequence belongs to the EPSP synthase family. MurA subfamily.

Its subcellular location is the cytoplasm. The enzyme catalyses phosphoenolpyruvate + UDP-N-acetyl-alpha-D-glucosamine = UDP-N-acetyl-3-O-(1-carboxyvinyl)-alpha-D-glucosamine + phosphate. It functions in the pathway cell wall biogenesis; peptidoglycan biosynthesis. Functionally, cell wall formation. Adds enolpyruvyl to UDP-N-acetylglucosamine. This is UDP-N-acetylglucosamine 1-carboxyvinyltransferase from Histophilus somni (strain 129Pt) (Haemophilus somnus).